A 365-amino-acid polypeptide reads, in one-letter code: MCGIRAKKSGLGGYGAGLLAALLGVSFLSQHAQTAEHVTNAANNTTIQIMKSTLSLSEVCGKTKFQGKIYGGQIAGAERWPWQASLRLYGRHICGAVLIDKNWVLSAAHCFQRSQEPSDYHVMLGYTDLNSPTRYSRTMSVQKVIVHKDYNRFHTQGSDIVLLQLRSSVEYSSHILPACVPEENIKIPKEKACWASGWGYLREDVRIPLPNELYEAELIIMSNDQCKGFFPPPVPGSGRSYYIYDDMVCAADYDMSKSICAGDSGGPLVCLLEGSWYVVGLTSWSSTCEEPIVSPSVFARVSYFDKWIKDNKKSSSNSKPGESPHHPGSPENENPEGDNKNQGAVIKPTVCTALLLSQILLQQLI.

An N-terminal signal peptide occupies residues 1-34; that stretch reads MCGIRAKKSGLGGYGAGLLAALLGVSFLSQHAQT. The N-linked (GlcNAc...) asparagine glycan is linked to Asn-44. The Peptidase S1 domain maps to 69 to 313; sequence IYGGQIAGAE…FDKWIKDNKK (245 aa). A disulfide bond links Cys-94 and Cys-110. Active-site charge relay system residues include His-109 and Asp-159. Cystine bridges form between Cys-193/Cys-270, Cys-226/Cys-249, and Cys-260/Cys-288. The Charge relay system role is filled by Ser-264. The disordered stretch occupies residues 312–343; it reads KKSSSNSKPGESPHHPGSPENENPEGDNKNQG.

It belongs to the peptidase S1 family. Expressed in testis. More specifically, abundantly expressed in the haploid round spermatid.

It localises to the cytoplasmic vesicle. The protein resides in the secretory vesicle. Its subcellular location is the acrosome. The protein localises to the secreted. May play an important role in the sperm/egg interaction; released during the acrosome reaction. The protein is Serine protease 40 (Prss40) of Mus musculus (Mouse).